The primary structure comprises 460 residues: Acetyl-CoA decarbonylase/synthase complex subunit beta (460 aa).

Residues Cys-188, Cys-191, Cys-277, and Cys-279 each contribute to the [Ni-Fe-S] cluster site. The span at 402 to 416 (EETEPEEEEVEEAYP) shows a compositional bias: acidic residues. Residues 402–422 (EETEPEEEEVEEAYPEETPIP) are disordered.

Belongs to the CdhC family. Monomer. The ACDS complex is made up of alpha, epsilon, beta, gamma and delta chains with a probable stoichiometry of (alpha(2)epsilon(2))(4)-beta(8)-(gamma(1)delta(1))(8). The cofactor is [Ni-Fe-S] cluster.

The enzyme catalyses Co(I)-[corrinoid Fe-S protein] + acetyl-CoA + H(+) = methyl-Co(III)-[corrinoid Fe-S protein] + CO + CoA. In terms of biological role, part of a complex that catalyzes the reversible cleavage of acetyl-CoA, allowing autotrophic growth from CO(2). The alpha-epsilon complex generates CO from CO(2), while the beta subunit (this protein) combines the CO with CoA and a methyl group to form acetyl-CoA. The methyl group, which is incorporated into acetyl-CoA, is transferred to the beta subunit by a corrinoid iron-sulfur protein (the gamma-delta complex). This is Acetyl-CoA decarbonylase/synthase complex subunit beta from Methanothermobacter thermautotrophicus (strain ATCC 29096 / DSM 1053 / JCM 10044 / NBRC 100330 / Delta H) (Methanobacterium thermoautotrophicum).